We begin with the raw amino-acid sequence, 186 residues long: MLNILNNVSNSSLYSAASNATAQTGSNLINDLVPETLTASGISIAISVFSVIGTIVIALSVLPQTIKTLREKDTASLSLLLFLLNGIATAFLTLYGIGLVTVHPNSFSFLVDIKNGMFIYNREEWVAGYLICGIFLIMGEALCSVTSFIVLFCKVNNMIKAKKMGMSEEEYYEKQIKPFLKVKGAN.

The next 3 helical transmembrane spans lie at isoleucine 42–leucine 62, leucine 80–valine 100, and isoleucine 131–leucine 151.

The protein to U.parvum UU008, UU041 and UU042.

The protein localises to the cell membrane. This is an uncharacterized protein from Ureaplasma parvum serovar 3 (strain ATCC 700970).